The sequence spans 408 residues: 1-deoxy-D-xylulose 5-phosphate reductoisomerase (408 aa).

Residues Thr27, Gly28, Ser29, Ile30, Ala53, Arg54, Asn55, and Asn140 each contribute to the NADPH site. Residue Lys141 participates in 1-deoxy-D-xylulose 5-phosphate binding. Glu142 contributes to the NADPH binding site. Asp166 serves as a coordination point for Mn(2+). Residues Ser167, Glu168, Ser192, and His215 each coordinate 1-deoxy-D-xylulose 5-phosphate. Glu168 lines the Mn(2+) pocket. Gly221 contributes to the NADPH binding site. Residues Ser228, Asn233, Lys234, and Glu237 each contribute to the 1-deoxy-D-xylulose 5-phosphate site. Glu237 serves as a coordination point for Mn(2+).

It belongs to the DXR family. Mg(2+) is required as a cofactor. The cofactor is Mn(2+).

The enzyme catalyses 2-C-methyl-D-erythritol 4-phosphate + NADP(+) = 1-deoxy-D-xylulose 5-phosphate + NADPH + H(+). It participates in isoprenoid biosynthesis; isopentenyl diphosphate biosynthesis via DXP pathway; isopentenyl diphosphate from 1-deoxy-D-xylulose 5-phosphate: step 1/6. Catalyzes the NADPH-dependent rearrangement and reduction of 1-deoxy-D-xylulose-5-phosphate (DXP) to 2-C-methyl-D-erythritol 4-phosphate (MEP). The chain is 1-deoxy-D-xylulose 5-phosphate reductoisomerase from Nitratidesulfovibrio vulgaris (strain DP4) (Desulfovibrio vulgaris).